The chain runs to 154 residues: 3-hydroxyacyl-[acyl-carrier-protein] dehydratase FabZ (154 aa).

Residue histidine 57 is part of the active site.

The protein belongs to the thioester dehydratase family. FabZ subfamily.

It is found in the cytoplasm. It catalyses the reaction a (3R)-hydroxyacyl-[ACP] = a (2E)-enoyl-[ACP] + H2O. Its function is as follows. Involved in unsaturated fatty acids biosynthesis. Catalyzes the dehydration of short chain beta-hydroxyacyl-ACPs and long chain saturated and unsaturated beta-hydroxyacyl-ACPs. The sequence is that of 3-hydroxyacyl-[acyl-carrier-protein] dehydratase FabZ from Allorhizobium ampelinum (strain ATCC BAA-846 / DSM 112012 / S4) (Agrobacterium vitis (strain S4)).